A 367-amino-acid polypeptide reads, in one-letter code: Phosphoribosylaminoimidazole-succinocarboxamide synthase (367 aa).

Belongs to the SAICAR synthetase family.

It catalyses the reaction 5-amino-1-(5-phospho-D-ribosyl)imidazole-4-carboxylate + L-aspartate + ATP = (2S)-2-[5-amino-1-(5-phospho-beta-D-ribosyl)imidazole-4-carboxamido]succinate + ADP + phosphate + 2 H(+). It participates in purine metabolism; IMP biosynthesis via de novo pathway; 5-amino-1-(5-phospho-D-ribosyl)imidazole-4-carboxamide from 5-amino-1-(5-phospho-D-ribosyl)imidazole-4-carboxylate: step 1/2. This chain is Phosphoribosylaminoimidazole-succinocarboxamide synthase, found in Shewanella putrefaciens (strain CN-32 / ATCC BAA-453).